Consider the following 115-residue polypeptide: uncharacterized protein (115 aa).

Residues 1 to 11 (MKLTKEKKNDC) lie on the Cytoplasmic side of the membrane. Residues 12 to 32 (LVGVSYIPPLNFFTLTFLFLL) traverse the membrane as a helical segment. At 33–52 (RIEKVHLSLSLSLSLSLRFY) the chain is on the extracellular side. A helical membrane pass occupies residues 53 to 73 (YFHNVCYPSLFLFFCFVIPFF). Residues 74–78 (YSVRF) lie on the Cytoplasmic side of the membrane. Residues 79 to 98 (ILLYLHILRSFYELNILLLY) form a helical membrane-spanning segment. Over 99 to 115 (GAENSRRQSPPGYYVIR) the chain is Extracellular.

It localises to the membrane. This is an uncharacterized protein from Saccharomyces cerevisiae (strain ATCC 204508 / S288c) (Baker's yeast).